We begin with the raw amino-acid sequence, 433 residues long: Oxaloacetate decarboxylase beta chain 2 (433 aa).

A run of 10 helical transmembrane segments spans residues 16 to 36 (LGAG…LAIA), 42 to 62 (LLLL…AGMA), 122 to 142 (VLAL…VIFM), 168 to 188 (FGIF…LIAF), 190 to 210 (LPQA…AIYL), 216 to 236 (PELL…VPLI), 266 to 286 (ILFP…AAPL), 311 to 331 (NGLI…KLVA), 340 to 360 (LGIL…GVLM), and 413 to 433 (VAGV…VLAM).

The protein belongs to the GcdB/MmdB/OadB family. In terms of assembly, heterotrimer of an alpha, a beta and a gamma subunit. Na(+) serves as cofactor.

Its subcellular location is the cell membrane. The catalysed reaction is oxaloacetate + 2 Na(+)(in) + H(+) = pyruvate + 2 Na(+)(out) + CO2. Its function is as follows. Catalyzes the decarboxylation of oxaloacetate coupled to Na(+) translocation. In Salmonella typhi, this protein is Oxaloacetate decarboxylase beta chain 2 (oadB2).